Here is a 181-residue protein sequence, read N- to C-terminus: ATP-dependent protease subunit HslV (181 aa).

T7 is an active-site residue. G164, C167, and T170 together coordinate Na(+).

It belongs to the peptidase T1B family. HslV subfamily. A double ring-shaped homohexamer of HslV is capped on each side by a ring-shaped HslU homohexamer. The assembly of the HslU/HslV complex is dependent on binding of ATP.

The protein localises to the cytoplasm. It catalyses the reaction ATP-dependent cleavage of peptide bonds with broad specificity.. Its activity is regulated as follows. Allosterically activated by HslU binding. Its function is as follows. Protease subunit of a proteasome-like degradation complex believed to be a general protein degrading machinery. This is ATP-dependent protease subunit HslV from Shouchella clausii (strain KSM-K16) (Alkalihalobacillus clausii).